The following is a 276-amino-acid chain: Aquaporin-1 (276 aa).

Residues 1–10 (MLDAEQKKNY) lie on the Cytoplasmic side of the membrane. The chain crosses the membrane as a helical span at residues 11–31 (VAGAFGEFVGTAYFLFMGVGG). Topologically, residues 32–46 (AVNFLNNAAGSPLPG) are extracellular. A helical transmembrane segment spans residues 47–67 (FAIPFCFGFSLFVNVFIWAPI). The Cytoplasmic portion of the chain corresponds to 68 to 93 (SGGVFNPSITIALMATNPKDFPWYRG). The NPA 1 signature appears at 73-75 (NPS). The helical transmembrane segment at 94 to 114 (ILYIVSQFLGALFGSWLIDLI) threads the bilayer. The Extracellular portion of the chain corresponds to 115–133 (QPEAPNAATLLADGVSVAQ). The chain crosses the membrane as a helical span at residues 134–154 (GLFMEMFATSVLTMAVLILAG). Residues 155 to 159 (ERYGK) lie on the Cytoplasmic side of the membrane. The helical transmembrane segment at 160-180 (YLAPFGIGMSLFISALCAGPY) threads the bilayer. Topologically, residues 181–204 (TGASLNPARTLGPAIVANQYGRAH) are extracellular. Residues 186-188 (NPA) carry the NPA 2 motif. Residues 205–225 (WIYYVGPTLGSLLAAGYWHIL) form a helical membrane-spanning segment. Residues 226–276 (RILNIDVVDLKNVLNKCKKCGKEDPRISLKHCEECLKDDPKPEKYDIESQN) are Cytoplasmic-facing.

This sequence belongs to the MIP/aquaporin (TC 1.A.8) family.

It is found in the cell membrane. It carries out the reaction H2O(in) = H2O(out). With respect to regulation, polyethylene glycol (PEG) stimulates whereas glycerol inhibits the aquaporin activity. In terms of biological role, water channel required to facilitate the transport of water across membranes. Stimulates plant drought tolerance by facilitating the transport of water from the arbuscular mycorrhiza fungus to host plants. In Rhizophagus irregularis (Arbuscular mycorrhizal fungus), this protein is Aquaporin-1.